The following is a 322-amino-acid chain: Ferredoxin--NADP reductase (322 aa).

FAD-binding residues include aspartate 34, glutamine 42, tyrosine 47, valine 87, phenylalanine 120, aspartate 279, and threonine 320.

It belongs to the ferredoxin--NADP reductase type 2 family. Homodimer. It depends on FAD as a cofactor.

The enzyme catalyses 2 reduced [2Fe-2S]-[ferredoxin] + NADP(+) + H(+) = 2 oxidized [2Fe-2S]-[ferredoxin] + NADPH. This chain is Ferredoxin--NADP reductase, found in Streptococcus pneumoniae serotype 2 (strain D39 / NCTC 7466).